Here is a 506-residue protein sequence, read N- to C-terminus: Nostrin (506 aa).

One can recognise an F-BAR domain in the interval 1–260 (MRDPLTDCSY…AISKVDVEKD (260 aa)). At Ser114 the chain carries Phosphoserine. 2 coiled-coil regions span residues 160-230 (SLTQ…LNQY) and 305-334 (KLGR…ASSS). One can recognise an REM-1 domain in the interval 292 to 372 (PMDKERRKSL…SYKLSSVLAD (81 aa)). Positions 413-435 (KAESKAPAGGQNNPSSSPSGSTV) are disordered. Residues 419-435 (PAGGQNNPSSSPSGSTV) are compositionally biased toward low complexity. One can recognise an SH3 domain in the interval 438-497 (ASKHLCKALYTFQARQDDELNLEKGDIVTVHEKKEEGWWFGSLKGKRGHFPAAYVEELPP). Ser479 is modified (phosphoserine).

Homotrimer. Interacts with NOS3, DNM2, WASL and CAV1. Interacts with DAB2. Interacts (via SH3 domain) with DNM2; this interaction allows the recruitment of NOS3 to dynamin-positive structures.

The protein localises to the cell membrane. Its subcellular location is the cytoplasmic vesicle. It localises to the cytoplasm. The protein resides in the cytoskeleton. It is found in the nucleus. In terms of biological role, multivalent adapter protein which may decrease NOS3 activity by inducing its translocation away from the plasma membrane. In Mus musculus (Mouse), this protein is Nostrin.